A 366-amino-acid polypeptide reads, in one-letter code: DNA polymerase IV (366 aa).

The region spanning 6-197 (IIHVDMDYFY…LKVSKLWGIG (192 aa)) is the UmuC domain. Asp-10 and Asp-114 together coordinate Mg(2+). Residue Glu-115 is part of the active site.

Belongs to the DNA polymerase type-Y family. In terms of assembly, monomer. It depends on Mg(2+) as a cofactor.

The protein resides in the cytoplasm. It carries out the reaction DNA(n) + a 2'-deoxyribonucleoside 5'-triphosphate = DNA(n+1) + diphosphate. Its function is as follows. Poorly processive, error-prone DNA polymerase involved in untargeted mutagenesis. Copies undamaged DNA at stalled replication forks, which arise in vivo from mismatched or misaligned primer ends. These misaligned primers can be extended by PolIV. Exhibits no 3'-5' exonuclease (proofreading) activity. May be involved in translesional synthesis. The protein is DNA polymerase IV of Methanosarcina acetivorans (strain ATCC 35395 / DSM 2834 / JCM 12185 / C2A).